Here is a 437-residue protein sequence, read N- to C-terminus: GTPase HflX (437 aa).

A disordered region spans residues 150–173 (DRQGGGSGGGKGGGGAARGEGEKQ). Over residues 152 to 167 (QGGGSGGGKGGGGAAR) the composition is skewed to gly residues. Residues 212 to 382 (ATAAIVGYTN…ACVEMLESRV (171 aa)) form the Hflx-type G domain. Residues 218–225 (GYTNAGKS), 243–247 (FATLD), 265–268 (DTVG), 331–334 (NKVD), and 360–362 (SVK) contribute to the GTP site. Mg(2+)-binding residues include serine 225 and threonine 245.

This sequence belongs to the TRAFAC class OBG-HflX-like GTPase superfamily. HflX GTPase family. In terms of assembly, monomer. Associates with the 50S ribosomal subunit. Requires Mg(2+) as cofactor.

The protein resides in the cytoplasm. GTPase that associates with the 50S ribosomal subunit and may have a role during protein synthesis or ribosome biogenesis. The sequence is that of GTPase HflX from Akkermansia muciniphila (strain ATCC BAA-835 / DSM 22959 / JCM 33894 / BCRC 81048 / CCUG 64013 / CIP 107961 / Muc).